A 403-amino-acid polypeptide reads, in one-letter code: Large ribosomal subunit protein uL3 (403 aa).

The disordered stretch occupies residues 1 to 37; the sequence is MSHRKFSAPRHGSLGFLPRKRSSRHRGKVKSFPKDDP. Ser13 carries the post-translational modification Phosphoserine. The span at 18–31 shows a compositional bias: basic residues; sequence PRKRSSRHRGKVKS. Residue Lys39 forms a Glycyl lysine isopeptide (Lys-Gly) (interchain with G-Cter in SUMO2) linkage. Lys136 carries the post-translational modification N6-acetyllysine. Glycyl lysine isopeptide (Lys-Gly) (interchain with G-Cter in SUMO2) cross-links involve residues Lys224 and Lys226. The residue at position 245 (His245) is a Tele-methylhistidine. 2 positions are modified to N6-acetyllysine; alternate: Lys286 and Lys294. Residue Lys286 forms a Glycyl lysine isopeptide (Lys-Gly) (interchain with G-Cter in SUMO2); alternate linkage. Lys294 participates in a covalent cross-link: Glycyl lysine isopeptide (Lys-Gly) (interchain with G-Cter in SUMO1); alternate. Ser304 bears the Phosphoserine mark. Lys366 carries the post-translational modification N6-acetyllysine; alternate. A Glycyl lysine isopeptide (Lys-Gly) (interchain with G-Cter in SUMO2); alternate cross-link involves residue Lys366. An N6-acetyllysine modification is found at Lys373. Glycyl lysine isopeptide (Lys-Gly) (interchain with G-Cter in SUMO2) cross-links involve residues Lys386, Lys393, and Lys399.

Belongs to the universal ribosomal protein uL3 family. Component of the large ribosomal subunit. Interacts with DHX33. Constitutively monomethylated at His-245 by METTL18. Methylation at His-245 regulates translation elongation by slowing ribosome traversal on tyrosine codons: slower elongation provides enough time for proper folding of synthesized proteins and prevents cellular aggregation of tyrosine-rich proteins. It is not required for incorporation of RPL3 into ribosomes.

It is found in the nucleus. It localises to the nucleolus. The protein resides in the cytoplasm. Functionally, component of the large ribosomal subunit. The ribosome is a large ribonucleoprotein complex responsible for the synthesis of proteins in the cell. The polypeptide is Large ribosomal subunit protein uL3 (Rpl3) (Rattus norvegicus (Rat)).